Here is a 210-residue protein sequence, read N- to C-terminus: ATP-dependent Clp protease proteolytic subunit (210 aa).

Serine 114 functions as the Nucleophile in the catalytic mechanism. Histidine 139 is a catalytic residue.

It belongs to the peptidase S14 family. In terms of assembly, fourteen ClpP subunits assemble into 2 heptameric rings which stack back to back to give a disk-like structure with a central cavity, resembling the structure of eukaryotic proteasomes.

The protein localises to the cytoplasm. It catalyses the reaction Hydrolysis of proteins to small peptides in the presence of ATP and magnesium. alpha-casein is the usual test substrate. In the absence of ATP, only oligopeptides shorter than five residues are hydrolyzed (such as succinyl-Leu-Tyr-|-NHMec, and Leu-Tyr-Leu-|-Tyr-Trp, in which cleavage of the -Tyr-|-Leu- and -Tyr-|-Trp bonds also occurs).. Cleaves peptides in various proteins in a process that requires ATP hydrolysis. Has a chymotrypsin-like activity. Plays a major role in the degradation of misfolded proteins. This Janthinobacterium sp. (strain Marseille) (Minibacterium massiliensis) protein is ATP-dependent Clp protease proteolytic subunit.